Here is a 292-residue protein sequence, read N- to C-terminus: Tetratricopeptide repeat protein 1 (292 aa).

The interval 20–125 (TDPQEAECLH…SSRLKEEGNE (106 aa)) is disordered. Basic and acidic residues-rich tracts occupy residues 36–49 (KEQH…KDVD) and 75–85 (GADKLENKPED). The segment covering 86 to 98 (DMNPSELDEEYLM) has biased composition (acidic residues). At S90 the chain carries Phosphoserine. A compositionally biased stretch (basic and acidic residues) spans 99-125 (ELEKNMPDEEKKRRREESSRLKEEGNE). 3 TPR repeats span residues 116–149 (SSRL…CPSC), 155–188 (SVLF…NPSY), and 189–222 (IRAI…DPSV).

Interacts with the GAP domain of NF1. Interacts (via TPR repeats) with HSP90AA1 and HSPA8.

In Bos taurus (Bovine), this protein is Tetratricopeptide repeat protein 1 (TTC1).